Consider the following 401-residue polypeptide: 8-amino-7-oxononanoate synthase (401 aa).

Substrate is bound at residue R19. 106 to 107 provides a ligand contact to pyridoxal 5'-phosphate; the sequence is GY. H131 is a substrate binding site. Residues S176, H204, and T233 each contribute to the pyridoxal 5'-phosphate site. Residue K236 is modified to N6-(pyridoxal phosphate)lysine. T350 contacts substrate.

Belongs to the class-II pyridoxal-phosphate-dependent aminotransferase family. BioF subfamily. Homodimer. Requires pyridoxal 5'-phosphate as cofactor.

It catalyses the reaction 6-carboxyhexanoyl-[ACP] + L-alanine + H(+) = (8S)-8-amino-7-oxononanoate + holo-[ACP] + CO2. Its pathway is cofactor biosynthesis; biotin biosynthesis. Catalyzes the decarboxylative condensation of pimeloyl-[acyl-carrier protein] and L-alanine to produce 8-amino-7-oxononanoate (AON), [acyl-carrier protein], and carbon dioxide. In Pseudomonas aeruginosa (strain ATCC 15692 / DSM 22644 / CIP 104116 / JCM 14847 / LMG 12228 / 1C / PRS 101 / PAO1), this protein is 8-amino-7-oxononanoate synthase.